Here is an 895-residue protein sequence, read N- to C-terminus: Protein translocase subunit SecA (895 aa).

Residues Q90, 108–112 (GEGKS), and D498 contribute to the ATP site.

The protein belongs to the SecA family.

It is found in the plastid. The protein localises to the chloroplast stroma. Its subcellular location is the chloroplast thylakoid membrane. The catalysed reaction is ATP + H2O + cellular proteinSide 1 = ADP + phosphate + cellular proteinSide 2.. In terms of biological role, has a central role in coupling the hydrolysis of ATP to the transfer of proteins across the thylakoid membrane. The polypeptide is Protein translocase subunit SecA (Cyanidium caldarium (Red alga)).